A 177-amino-acid polypeptide reads, in one-letter code: Large ribosomal subunit protein uL6 (177 aa).

The protein belongs to the universal ribosomal protein uL6 family. Part of the 50S ribosomal subunit.

Its function is as follows. This protein binds to the 23S rRNA, and is important in its secondary structure. It is located near the subunit interface in the base of the L7/L12 stalk, and near the tRNA binding site of the peptidyltransferase center. In Mannheimia succiniciproducens (strain KCTC 0769BP / MBEL55E), this protein is Large ribosomal subunit protein uL6.